The following is a 131-amino-acid chain: Outer membrane protein assembly factor BamE (131 aa).

The N-terminal stretch at Met1–Gly16 is a signal peptide. Cys17 is lipidated: N-palmitoyl cysteine. Cys17 is lipidated: S-diacylglycerol cysteine. The tract at residues Ser112–Arg131 is disordered.

Belongs to the BamE family. As to quaternary structure, part of the Bam complex.

The protein localises to the cell outer membrane. In terms of biological role, part of the outer membrane protein assembly complex, which is involved in assembly and insertion of beta-barrel proteins into the outer membrane. The sequence is that of Outer membrane protein assembly factor BamE from Xanthomonas campestris pv. campestris (strain ATCC 33913 / DSM 3586 / NCPPB 528 / LMG 568 / P 25).